The primary structure comprises 259 residues: Zinc import ATP-binding protein ZnuC (259 aa).

The ABC transporter domain occupies 22 to 238 (VEARGLTVRR…PEYRALFGAH (217 aa)). ATP is bound at residue 54-61 (GPNGSGKS).

Belongs to the ABC transporter superfamily. Zinc importer (TC 3.A.1.15.5) family. As to quaternary structure, the complex is composed of two ATP-binding proteins (ZnuC), two transmembrane proteins (ZnuB) and a solute-binding protein (ZnuA).

The protein localises to the cell inner membrane. The catalysed reaction is Zn(2+)(out) + ATP(in) + H2O(in) = Zn(2+)(in) + ADP(in) + phosphate(in) + H(+)(in). Functionally, part of the ABC transporter complex ZnuABC involved in zinc import. Responsible for energy coupling to the transport system. This is Zinc import ATP-binding protein ZnuC from Alkalilimnicola ehrlichii (strain ATCC BAA-1101 / DSM 17681 / MLHE-1).